A 486-amino-acid chain; its full sequence is Betaine aldehyde dehydrogenase (486 aa).

K(+)-binding residues include Thr-23 and Asp-90. 147–149 serves as a coordination point for NAD(+); sequence GAW. Lys-159 functions as the Charge relay system in the catalytic mechanism. Residues 173–176 and 226–229 each bind NAD(+); these read KPSE and ESGT. Residue Leu-241 coordinates K(+). Glu-247 (proton acceptor) is an active-site residue. Residues Gly-249, Cys-281, and Glu-382 each contribute to the NAD(+) site. The Nucleophile role is filled by Cys-281. The residue at position 281 (Cys-281) is a Cysteine sulfenic acid (-SOH). Residues Lys-452 and Gly-455 each contribute to the K(+) site. Glu-459 functions as the Charge relay system in the catalytic mechanism.

The protein belongs to the aldehyde dehydrogenase family. In terms of assembly, dimer of dimers. Requires K(+) as cofactor.

It carries out the reaction betaine aldehyde + NAD(+) + H2O = glycine betaine + NADH + 2 H(+). It participates in amine and polyamine biosynthesis; betaine biosynthesis via choline pathway; betaine from betaine aldehyde: step 1/1. Functionally, involved in the biosynthesis of the osmoprotectant glycine betaine. Catalyzes the irreversible oxidation of betaine aldehyde to the corresponding acid. This chain is Betaine aldehyde dehydrogenase, found in Vibrio vulnificus (strain CMCP6).